The following is a 217-amino-acid chain: ATP phosphoribosyltransferase (217 aa).

It belongs to the ATP phosphoribosyltransferase family. Short subfamily. Heteromultimer composed of HisG and HisZ subunits.

The protein resides in the cytoplasm. The enzyme catalyses 1-(5-phospho-beta-D-ribosyl)-ATP + diphosphate = 5-phospho-alpha-D-ribose 1-diphosphate + ATP. It functions in the pathway amino-acid biosynthesis; L-histidine biosynthesis; L-histidine from 5-phospho-alpha-D-ribose 1-diphosphate: step 1/9. Its function is as follows. Catalyzes the condensation of ATP and 5-phosphoribose 1-diphosphate to form N'-(5'-phosphoribosyl)-ATP (PR-ATP). Has a crucial role in the pathway because the rate of histidine biosynthesis seems to be controlled primarily by regulation of HisG enzymatic activity. This Prochlorococcus marinus (strain MIT 9313) protein is ATP phosphoribosyltransferase.